Consider the following 658-residue polypeptide: Sodium/nucleoside cotransporter 1 (658 aa).

The Cytoplasmic portion of the chain corresponds to 1-75 (MEKASGRKSL…ARTFCQRHAS (75 aa)). A helical transmembrane segment spans residues 76–99 (LFKKILLGLLCLAYAAYFLAACIL). Residues 100-104 (DFQRA) are Extracellular-facing. The chain crosses the membrane as a helical span at residues 105 to 123 (LALFVITCLVILVLLLHFL). Over 124 to 142 (KKFLGKKLTRCLKPFKNSQ) the chain is Cytoplasmic. The chain crosses the membrane as a helical span at residues 143–162 (LRLWIKRVFAGVSLVGLILW). Topologically, residues 163–173 (LALDTAQRPEQ) are extracellular. The helical transmembrane segment at 174–190 (LISFAGICMFVLILFAC) threads the bilayer. The Cytoplasmic portion of the chain corresponds to 191–196 (SKHHSA). The chain crosses the membrane as a helical span at residues 197–217 (VSWRTVFWGLGLQFVFGLLVI). The Extracellular segment spans residues 218 to 256 (RTDPGFIAFQWLGDQVQIFLAYTVAGSSFVLGDTLVNDV). Residues 257–278 (FAFQSLPIIIFFGCVMSILYYL) traverse the membrane as a helical segment. Over 279–289 (GLVQWVVQKIA) the chain is Cytoplasmic. A helical membrane pass occupies residues 290-313 (WFLQVTMRTTATETLAVAGNIFVG). Topologically, residues 314-332 (MTEAPLLIRPYLADLTLSE) are extracellular. Residues 333-355 (IHAVMTSGFATISGTVLGAFISF) form a helical membrane-spanning segment. The Cytoplasmic segment spans residues 356–361 (GIDASS). The helical transmembrane segment at 362-381 (LISASVMGAPCALALSKLVY) threads the bilayer. Residues 382–418 (PEEEESKFKSKEGVKLPRGKESNVLEAASNGATDAIA) are Extracellular-facing. A helical transmembrane segment spans residues 419 to 441 (LVANVAANLVAFLAVLAFINAAL). Residues 442-452 (SWLGELVDIQG) lie on the Cytoplasmic side of the membrane. A helical membrane pass occupies residues 453-474 (LTFQVICSYILRPMVYMMGVEW). At 475–529 (TDCPMVAEMVGIKFFTNEFVAYQQLSQYKKKRLSGMEEWIDGQKQWISVRAEVIT) the chain is on the extracellular side. The helical transmembrane segment at 530 to 553 (TFSLCGFANLSSIGITLGGLTSMV) threads the bilayer. Residues 554–564 (PHRKSDLSKVV) are Cytoplasmic-facing. A helical membrane pass occupies residues 565–587 (IRALFTGSCVSFISACVAGILYV). At 588–658 (PRGAETDCVS…CGFYNNTVCA (71 aa)) the chain is on the extracellular side. N653 is a glycosylation site (N-linked (GlcNAc...) asparagine).

It belongs to the concentrative nucleoside transporter (CNT) (TC 2.A.41) family. In terms of processing, N-glycosylated. N-glycosylation is required for localization to the plasma membrane and the transporter activity.

The protein localises to the cell membrane. It localises to the apical cell membrane. The enzyme catalyses uridine(out) + Na(+)(out) = uridine(in) + Na(+)(in). The catalysed reaction is thymidine(out) + Na(+)(out) = thymidine(in) + Na(+)(in). It carries out the reaction cytidine(out) + Na(+)(out) = cytidine(in) + Na(+)(in). It catalyses the reaction adenosine(out) + Na(+)(out) = adenosine(in) + Na(+)(in). With respect to regulation, due to its high apparent affinity but slow transport, adenosine could act as a negative regulator of pyrimidine transport under some conditions. In terms of biological role, sodium and pyrimidine nucleoside symporter of the plasma membrane that imports uridine, thymidine and cytidine into cells by coupling their transport to the transmembrane sodium electrochemical gradient. Also transports adenosine, an atypical substrate transported with high apparent affinity, but low maximum velocity. Therefore, exhibits the transport characteristics of the nucleoside transport system cit or N2 subtype (N2/cit). Involved in renal nucleoside (re)absorption. The sequence is that of Sodium/nucleoside cotransporter 1 (SLC28A1) from Oryctolagus cuniculus (Rabbit).